A 54-amino-acid polypeptide reads, in one-letter code: Putative collagen-like domain-containing protein 065L (54 aa).

The tract at residues 1–54 is disordered; sequence MRGLEAPGAVGPTGPSGAPGSQGPDGDVGGMGPEGPKGDDGPVGPKGPQGAAIF. The 45-residue stretch at 7-51 folds into the Collagen-like domain; that stretch reads PGAVGPTGPSGAPGSQGPDGDVGGMGPEGPKGDDGPVGPKGPQGA. Residues 26–35 show a composition bias toward gly residues; it reads GDVGGMGPEG. The segment covering 42 to 54 has biased composition (low complexity); the sequence is PVGPKGPQGAAIF.

The polypeptide is Putative collagen-like domain-containing protein 065L (Dryophytes versicolor (chameleon treefrog)).